A 198-amino-acid chain; its full sequence is Holliday junction branch migration complex subunit RuvA (198 aa).

The segment at 1–63 is domain I; that stretch reads MYDYIKGQLT…EDAQLLFGFH (63 aa). Residues 64–142 form a domain II region; it reads SEEEKDVFLK…EAPKEESSKP (79 aa). A flexible linker region spans residues 143–147; that stretch reads PKAKQ. The interval 148–198 is domain III; the sequence is QGNEQLDEAVEALLALGYKATELKKIRAFFEGTSETAEQYIKSALKMLMKG.

This sequence belongs to the RuvA family. Homotetramer. Forms an RuvA(8)-RuvB(12)-Holliday junction (HJ) complex. HJ DNA is sandwiched between 2 RuvA tetramers; dsDNA enters through RuvA and exits via RuvB. An RuvB hexamer assembles on each DNA strand where it exits the tetramer. Each RuvB hexamer is contacted by two RuvA subunits (via domain III) on 2 adjacent RuvB subunits; this complex drives branch migration. In the full resolvosome a probable DNA-RuvA(4)-RuvB(12)-RuvC(2) complex forms which resolves the HJ.

It is found in the cytoplasm. In terms of biological role, the RuvA-RuvB-RuvC complex processes Holliday junction (HJ) DNA during genetic recombination and DNA repair, while the RuvA-RuvB complex plays an important role in the rescue of blocked DNA replication forks via replication fork reversal (RFR). RuvA specifically binds to HJ cruciform DNA, conferring on it an open structure. The RuvB hexamer acts as an ATP-dependent pump, pulling dsDNA into and through the RuvAB complex. HJ branch migration allows RuvC to scan DNA until it finds its consensus sequence, where it cleaves and resolves the cruciform DNA. This is Holliday junction branch migration complex subunit RuvA from Streptococcus equi subsp. zooepidemicus (strain H70).